The primary structure comprises 451 residues: Heat shock factor protein (451 aa).

The DNA-binding element occupies 12 to 117 (VPAFLAKLWT…LLENIKRKVN (106 aa)). Disordered stretches follow at residues 210-273 (LNDS…LEAS) and 285-307 (LTPS…PISP). Positions 232 to 246 (PSSTSYPVSGFTDSS) are enriched in polar residues.

It belongs to the HSF family. In terms of assembly, homotrimer. Exhibits temperature-dependent phosphorylation.

The protein localises to the nucleus. DNA-binding protein that specifically binds heat shock promoter elements (HSE) and activates transcription. The protein is Heat shock factor protein (hsf1) of Xenopus laevis (African clawed frog).